The chain runs to 94 residues: Neutrophil defensin 6 (94 aa).

A signal peptide spans 1-19 (MRTIAILAAILLFALLAQA). Residues 20 to 61 (KSLQETADEAATQEQPGEDDQDLAVSFEENGLSTLRASGSQA) constitute a propeptide that is removed on maturation. 3 disulfide bridges follow: cysteine 65/cysteine 93, cysteine 67/cysteine 82, and cysteine 72/cysteine 92.

Belongs to the alpha-defensin family.

It is found in the secreted. Defensins 6 and 7 have bacteriostatic activity against Gram-positive bacteria S.aureus and L.monocytogenes and Gram-negative bacterium E.coli and antifungal activity against C.neoformans. Defensin 7 has microbicidial activity against Gram-positive bacteria S.aureus and L.monocytogenes. The chain is Neutrophil defensin 6 from Macaca mulatta (Rhesus macaque).